The following is a 183-amino-acid chain: Putative manganese efflux pump MntP 1 (183 aa).

The next 6 helical transmembrane spans lie at leucine 6–isoleucine 26, isoleucine 36–isoleucine 56, isoleucine 64–isoleucine 84, isoleucine 100–threonine 120, leucine 130–isoleucine 150, and isoleucine 158–leucine 178.

Belongs to the MntP (TC 9.B.29) family.

Its subcellular location is the cell membrane. Functionally, probably functions as a manganese efflux pump. This is Putative manganese efflux pump MntP 1 from Clostridium botulinum (strain Langeland / NCTC 10281 / Type F).